The following is a 131-amino-acid chain: Small ribosomal subunit protein uS11 (131 aa).

This sequence belongs to the universal ribosomal protein uS11 family. In terms of assembly, part of the 30S ribosomal subunit. Interacts with proteins S7 and S18. Binds to IF-3.

Located on the platform of the 30S subunit, it bridges several disparate RNA helices of the 16S rRNA. Forms part of the Shine-Dalgarno cleft in the 70S ribosome. The polypeptide is Small ribosomal subunit protein uS11 (Deinococcus geothermalis (strain DSM 11300 / CIP 105573 / AG-3a)).